The sequence spans 220 residues: Inner membrane-spanning protein YciB (220 aa).

A run of 6 helical transmembrane segments spans residues 20 to 40 (EVPPLLKLALELGPLLVFFFA), 57 to 77 (IGAPIFLATALFMAATVIALA), 86 to 106 (LPIMPLVSGIVVLVFGALTLW), 123 to 143 (LFGGILLGGLFFGKSLLGYVF), 156 to 176 (KLTLRWGLFFIFLAIVNEIVW), and 187 to 207 (FKVWGIMPITIVFTLLQMPLI).

Belongs to the YciB family.

It localises to the cell inner membrane. Functionally, plays a role in cell envelope biogenesis, maintenance of cell envelope integrity and membrane homeostasis. The sequence is that of Inner membrane-spanning protein YciB from Brucella abortus (strain S19).